The sequence spans 515 residues: MATTLNPSEISELIKNRIEKVKLAAESRNEGTVTSVSDGIVRIFGLADVMQGEMIELPNNSFALALNLERDSVGAVVLGGYEHLREGDVAKTTGRILEVPVGPELLGRVVNALGEPIDGKGPLGTDLTAPVERVAPGVIWRKSVDQPVQTGYKSVDSMIPIGRGQRELIIGDRQTGKTAMAIDAVINQKGTGIKCVYVAIGQKASTIANIVRKLEENGALAHTVVVAATASESAAMQYISAYSGCTMGEYFMDRGEDALIVYDDLSKQAVAYRQISLLLKRPPGREAYPGDVFYLHSRLLERAARVSEEYVEKFTEGKVTGKTGSLTALPIIETQAGDVSAFVPTNVISITDGQIFLETDLFNAGIRPAVNAGISVSRVGGSAQTKIIKKLSGGIRISLAQYRELAAFAQFASDLDEATRKQLERGQRVTELMKQKQYAPMSIANQALSIYAVNEGYLDDVPVNKLLAFEEGLHAHFANTQGELINKVNATGGWDNDIEGAFKKGIAEFKTTGSW.

Residue 171–178 (GDRQTGKT) coordinates ATP.

Belongs to the ATPase alpha/beta chains family. In terms of assembly, F-type ATPases have 2 components, CF(1) - the catalytic core - and CF(0) - the membrane proton channel. CF(1) has five subunits: alpha(3), beta(3), gamma(1), delta(1), epsilon(1). CF(0) has three main subunits: a(1), b(2) and c(9-12). The alpha and beta chains form an alternating ring which encloses part of the gamma chain. CF(1) is attached to CF(0) by a central stalk formed by the gamma and epsilon chains, while a peripheral stalk is formed by the delta and b chains.

It is found in the cell inner membrane. The enzyme catalyses ATP + H2O + 4 H(+)(in) = ADP + phosphate + 5 H(+)(out). In terms of biological role, produces ATP from ADP in the presence of a proton gradient across the membrane. The alpha chain is a regulatory subunit. The polypeptide is ATP synthase subunit alpha (Stenotrophomonas maltophilia (strain R551-3)).